We begin with the raw amino-acid sequence, 366 residues long: Alanine racemase (366 aa).

Lysine 35 serves as the catalytic Proton acceptor; specific for D-alanine. Residue lysine 35 is modified to N6-(pyridoxal phosphate)lysine. Substrate is bound at residue arginine 130. The active-site Proton acceptor; specific for L-alanine is tyrosine 254. Methionine 302 lines the substrate pocket.

It belongs to the alanine racemase family. The cofactor is pyridoxal 5'-phosphate.

It carries out the reaction L-alanine = D-alanine. It participates in amino-acid biosynthesis; D-alanine biosynthesis; D-alanine from L-alanine: step 1/1. Its function is as follows. Catalyzes the interconversion of L-alanine and D-alanine. May also act on other amino acids. This Variovorax paradoxus (strain S110) protein is Alanine racemase (alr).